Here is a 178-residue protein sequence, read N- to C-terminus: ATP-dependent protease subunit HslV (178 aa).

The active site involves Thr-7. Na(+)-binding residues include Gly-162, Cys-165, and Thr-168.

It belongs to the peptidase T1B family. HslV subfamily. As to quaternary structure, a double ring-shaped homohexamer of HslV is capped on each side by a ring-shaped HslU homohexamer. The assembly of the HslU/HslV complex is dependent on binding of ATP.

The protein resides in the cytoplasm. It catalyses the reaction ATP-dependent cleavage of peptide bonds with broad specificity.. Its activity is regulated as follows. Allosterically activated by HslU binding. Functionally, protease subunit of a proteasome-like degradation complex believed to be a general protein degrading machinery. This Sulfurihydrogenibium sp. (strain YO3AOP1) protein is ATP-dependent protease subunit HslV.